We begin with the raw amino-acid sequence, 445 residues long: NAD-specific glutamate dehydrogenase (445 aa).

Residue K124 is part of the active site.

This sequence belongs to the Glu/Leu/Phe/Val dehydrogenases family. As to quaternary structure, homohexamer.

The protein localises to the cell surface. It carries out the reaction L-glutamate + NAD(+) + H2O = 2-oxoglutarate + NH4(+) + NADH + H(+). In terms of biological role, probably involved in degradation rather than biosynthesis of glutamate. The polypeptide is NAD-specific glutamate dehydrogenase (gdh) (Porphyromonas gingivalis (strain ATCC 33277 / DSM 20709 / CIP 103683 / JCM 12257 / NCTC 11834 / 2561)).